The sequence spans 349 residues: MLLVRNSTLGRLSSLRGFFRNINESNIFYRMVHHKVTIIGSGPAAHTAAIYLARAEIKPTLYEGFMANGIAAGGQLTTTTEIENFPGFPDGLTGSELMDRMKAQSIKFGTDVITETVSKVDLSSRPFKFWTEFNEDQEPETTDAIILSTGASAKRLHLPGEETYWQQGISACAVCDGAVPIFRNKPLAVIGGGDSACEEAQFLTKYGSKVYMLVRKDHLRASQIMQRRAEQNEKIEILYNHVTLEAKGDGKYLNALKVKNVKTNEEYDLPVNGLFYAIGHTPATNIVAGQVDLDEAGYVKTVPGSTLTNVPGVFAAGDVQDARYRQAITSAGSGCMAALDAEKYITELE.

A mitochondrion-targeting transit peptide spans 1-30; that stretch reads MLLVRNSTLGRLSSLRGFFRNINESNIFYR. Residues 41–44, 70–71, Gln-75, Asn-84, Val-117, Cys-175, Asp-318, and 325–327 contribute to the FAD site; these read SGPA, IA, and RQA. Cysteines 172 and 175 form a disulfide.

The protein belongs to the class-II pyridine nucleotide-disulfide oxidoreductase family. Homodimer. The cofactor is FAD.

Its subcellular location is the mitochondrion. It catalyses the reaction [thioredoxin]-dithiol + NADP(+) = [thioredoxin]-disulfide + NADPH + H(+). The protein is Thioredoxin reductase, mitochondrial (TRR1) of Kluyveromyces lactis (strain ATCC 8585 / CBS 2359 / DSM 70799 / NBRC 1267 / NRRL Y-1140 / WM37) (Yeast).